Here is an 899-residue protein sequence, read N- to C-terminus: Protein translocase subunit SecA (899 aa).

ATP-binding positions include Gln-87, 105-109, and Asp-516; that span reads GEGKT. Positions 884, 886, 895, and 896 each coordinate Zn(2+).

The protein belongs to the SecA family. In terms of assembly, monomer and homodimer. Part of the essential Sec protein translocation apparatus which comprises SecA, SecYEG and auxiliary proteins SecDF. Other proteins may also be involved. Zn(2+) is required as a cofactor.

The protein resides in the cell inner membrane. It localises to the cytoplasm. It catalyses the reaction ATP + H2O + cellular proteinSide 1 = ADP + phosphate + cellular proteinSide 2.. In terms of biological role, part of the Sec protein translocase complex. Interacts with the SecYEG preprotein conducting channel. Has a central role in coupling the hydrolysis of ATP to the transfer of proteins into and across the cell membrane, serving as an ATP-driven molecular motor driving the stepwise translocation of polypeptide chains across the membrane. The protein is Protein translocase subunit SecA of Borrelia garinii subsp. bavariensis (strain ATCC BAA-2496 / DSM 23469 / PBi) (Borreliella bavariensis).